We begin with the raw amino-acid sequence, 211 residues long: Glutathione S-transferase class-mu 28 kDa isozyme (211 aa).

At alanine 2 the chain carries N-acetylalanine. Residues 4 to 86 form the GST N-terminal domain; that stretch reads EHIKVIYFDG…YMAKKHHMMG (83 aa). Glutathione contacts are provided by residues tyrosine 10, 10 to 11, arginine 16, 41 to 45, leucine 53, 55 to 56, and 70 to 71; these read YF, WPKIK, AV, and ES. One can recognise a GST C-terminal domain in the interval 88–211; sequence TDEEYYSVEK…YLSNRPATPF (124 aa).

This sequence belongs to the GST superfamily. Mu family. In terms of assembly, homodimer. As to expression, in the adult, expressed in excretory epithelial cells but absent from the caecal epithelium and flame cells. Also expressed in the tegument and its extensions into the parenchyma. In the schistosomulum, expressed in the tegument and associated structures. Not expressed in digestive tract, reproductive organs or muscles (at protein level).

The enzyme catalyses RX + glutathione = an S-substituted glutathione + a halide anion + H(+). Conjugation of reduced glutathione to a wide number of exogenous and endogenous hydrophobic electrophiles. Its function is as follows. GST isoenzymes appear to play a central role in the parasite detoxification system. Other functions are also suspected including a role in increasing the solubility of haematin in the parasite gut. This is Glutathione S-transferase class-mu 28 kDa isozyme (GST28) from Schistosoma mansoni (Blood fluke).